Reading from the N-terminus, the 263-residue chain is Acyl-[acyl-carrier-protein]--UDP-N-acetylglucosamine O-acyltransferase (263 aa).

It belongs to the transferase hexapeptide repeat family. LpxA subfamily. In terms of assembly, homotrimer.

It is found in the cytoplasm. The enzyme catalyses a (3R)-hydroxyacyl-[ACP] + UDP-N-acetyl-alpha-D-glucosamine = a UDP-3-O-[(3R)-3-hydroxyacyl]-N-acetyl-alpha-D-glucosamine + holo-[ACP]. Its pathway is glycolipid biosynthesis; lipid IV(A) biosynthesis; lipid IV(A) from (3R)-3-hydroxytetradecanoyl-[acyl-carrier-protein] and UDP-N-acetyl-alpha-D-glucosamine: step 1/6. Involved in the biosynthesis of lipid A, a phosphorylated glycolipid that anchors the lipopolysaccharide to the outer membrane of the cell. This Xanthomonas axonopodis pv. citri (strain 306) protein is Acyl-[acyl-carrier-protein]--UDP-N-acetylglucosamine O-acyltransferase.